The chain runs to 353 residues: Phospho-N-acetylmuramoyl-pentapeptide-transferase (353 aa).

10 helical membrane-spanning segments follow: residues 22 to 42 (FAFF…ITWA), 65 to 85 (TPTM…LFCI), 88 to 108 (DNIF…IGLI), 129 to 149 (LLAQ…SSEL), 161 to 181 (PLFD…ISSS), 192 to 212 (GLAT…LYLS), 228 to 248 (GLGE…GFLW), 256 to 276 (VFMG…LAII), 281 to 301 (ILLL…ILQV), and 330 to 350 (KIIV…LASI).

Belongs to the glycosyltransferase 4 family. MraY subfamily. Requires Mg(2+) as cofactor.

It localises to the cell inner membrane. The enzyme catalyses UDP-N-acetyl-alpha-D-muramoyl-L-alanyl-gamma-D-glutamyl-meso-2,6-diaminopimeloyl-D-alanyl-D-alanine + di-trans,octa-cis-undecaprenyl phosphate = di-trans,octa-cis-undecaprenyl diphospho-N-acetyl-alpha-D-muramoyl-L-alanyl-D-glutamyl-meso-2,6-diaminopimeloyl-D-alanyl-D-alanine + UMP. The protein operates within cell wall biogenesis; peptidoglycan biosynthesis. Functionally, catalyzes the initial step of the lipid cycle reactions in the biosynthesis of the cell wall peptidoglycan: transfers peptidoglycan precursor phospho-MurNAc-pentapeptide from UDP-MurNAc-pentapeptide onto the lipid carrier undecaprenyl phosphate, yielding undecaprenyl-pyrophosphoryl-MurNAc-pentapeptide, known as lipid I. This chain is Phospho-N-acetylmuramoyl-pentapeptide-transferase, found in Campylobacter jejuni (strain RM1221).